A 697-amino-acid chain; its full sequence is Phosphate acetyltransferase (697 aa).

Positions 374 to 697 (LFLYNLVQAA…TVVITALQVK (324 aa)) are phosphate acetyltransferase.

This sequence in the N-terminal section; belongs to the CobB/CobQ family. It in the C-terminal section; belongs to the phosphate acetyltransferase and butyryltransferase family.

The protein resides in the cytoplasm. The catalysed reaction is acetyl-CoA + phosphate = acetyl phosphate + CoA. It participates in metabolic intermediate biosynthesis; acetyl-CoA biosynthesis; acetyl-CoA from acetate: step 2/2. Its function is as follows. Involved in acetate metabolism. The sequence is that of Phosphate acetyltransferase (pta) from Synechocystis sp. (strain ATCC 27184 / PCC 6803 / Kazusa).